Here is a 210-residue protein sequence, read N- to C-terminus: ATP-dependent Clp protease proteolytic subunit (210 aa).

S107 acts as the Nucleophile in catalysis. H132 is an active-site residue.

It belongs to the peptidase S14 family. In terms of assembly, fourteen ClpP subunits assemble into 2 heptameric rings which stack back to back to give a disk-like structure with a central cavity, resembling the structure of eukaryotic proteasomes.

The protein resides in the cytoplasm. The enzyme catalyses Hydrolysis of proteins to small peptides in the presence of ATP and magnesium. alpha-casein is the usual test substrate. In the absence of ATP, only oligopeptides shorter than five residues are hydrolyzed (such as succinyl-Leu-Tyr-|-NHMec, and Leu-Tyr-Leu-|-Tyr-Trp, in which cleavage of the -Tyr-|-Leu- and -Tyr-|-Trp bonds also occurs).. In terms of biological role, cleaves peptides in various proteins in a process that requires ATP hydrolysis. Has a chymotrypsin-like activity. Plays a major role in the degradation of misfolded proteins. The chain is ATP-dependent Clp protease proteolytic subunit from Chromobacterium violaceum (strain ATCC 12472 / DSM 30191 / JCM 1249 / CCUG 213 / NBRC 12614 / NCIMB 9131 / NCTC 9757 / MK).